Consider the following 371-residue polypeptide: Chaperone protein DnaJ (371 aa).

Positions Glu5 to Gly69 constitute a J domain. A CR-type zinc finger spans residues Gly127–Thr209. Positions 140, 143, 157, 160, 183, 186, 197, and 200 each coordinate Zn(2+). CXXCXGXG motif repeat units follow at residues Cys140–Gly147, Cys157–Gly164, Cys183–Gly190, and Cys197–Gly204.

Belongs to the DnaJ family. In terms of assembly, homodimer. The cofactor is Zn(2+).

The protein localises to the cytoplasm. Participates actively in the response to hyperosmotic and heat shock by preventing the aggregation of stress-denatured proteins and by disaggregating proteins, also in an autonomous, DnaK-independent fashion. Unfolded proteins bind initially to DnaJ; upon interaction with the DnaJ-bound protein, DnaK hydrolyzes its bound ATP, resulting in the formation of a stable complex. GrpE releases ADP from DnaK; ATP binding to DnaK triggers the release of the substrate protein, thus completing the reaction cycle. Several rounds of ATP-dependent interactions between DnaJ, DnaK and GrpE are required for fully efficient folding. Also involved, together with DnaK and GrpE, in the DNA replication of plasmids through activation of initiation proteins. This chain is Chaperone protein DnaJ, found in Streptococcus agalactiae serotype Ia (strain ATCC 27591 / A909 / CDC SS700).